The following is a 438-amino-acid chain: Methylenetetrahydrofolate--tRNA-(uracil-5-)-methyltransferase TrmFO 2 (438 aa).

9–14 (GAGLAG) is an FAD binding site.

The protein belongs to the MnmG family. TrmFO subfamily. It depends on FAD as a cofactor.

It localises to the cytoplasm. The catalysed reaction is uridine(54) in tRNA + (6R)-5,10-methylene-5,6,7,8-tetrahydrofolate + NADH + H(+) = 5-methyluridine(54) in tRNA + (6S)-5,6,7,8-tetrahydrofolate + NAD(+). It catalyses the reaction uridine(54) in tRNA + (6R)-5,10-methylene-5,6,7,8-tetrahydrofolate + NADPH + H(+) = 5-methyluridine(54) in tRNA + (6S)-5,6,7,8-tetrahydrofolate + NADP(+). Functionally, catalyzes the folate-dependent formation of 5-methyl-uridine at position 54 (M-5-U54) in all tRNAs. In Mycoplasma mycoides subsp. mycoides SC (strain CCUG 32753 / NCTC 10114 / PG1), this protein is Methylenetetrahydrofolate--tRNA-(uracil-5-)-methyltransferase TrmFO 2.